Here is a 72-residue protein sequence, read N- to C-terminus: Penaeidin-2b (72 aa).

A signal peptide spans 1-21 (MRLVVCLVFLASFALVCQGEA). Intrachain disulfides connect Cys-45–Cys-59, Cys-48–Cys-66, and Cys-60–Cys-67. Lysine amide is present on Lys-71.

It belongs to the penaeidin family.

It is found in the cytoplasmic granule. Antibacterial and antifungal activity. Presents chitin-binding activity. This is Penaeidin-2b from Penaeus vannamei (Whiteleg shrimp).